A 215-amino-acid polypeptide reads, in one-letter code: Cytochrome b6 (215 aa).

Residues 32–52 traverse the membrane as a helical segment; the sequence is IFYCLGGITLTCFLVQVATGF. Cysteine 35 contacts heme c. Histidine 86 and histidine 100 together coordinate heme b. Transmembrane regions (helical) follow at residues 90–110, 116–136, and 186–206; these read ASMMVLMMILHVFRVYLTGGF, LTWVTGVVLGVLTATFGVTGY, and LHTFVLPLLTAVFMLMHFLMI. 2 residues coordinate heme b: histidine 187 and histidine 202.

The protein belongs to the cytochrome b family. PetB subfamily. As to quaternary structure, the 4 large subunits of the cytochrome b6-f complex are cytochrome b6, subunit IV (17 kDa polypeptide, PetD), cytochrome f and the Rieske protein, while the 4 small subunits are PetG, PetL, PetM and PetN. The complex functions as a dimer. Requires heme b as cofactor. The cofactor is heme c.

The protein localises to the plastid. The protein resides in the chloroplast thylakoid membrane. In terms of biological role, component of the cytochrome b6-f complex, which mediates electron transfer between photosystem II (PSII) and photosystem I (PSI), cyclic electron flow around PSI, and state transitions. This chain is Cytochrome b6, found in Pisum sativum (Garden pea).